The primary structure comprises 821 residues: Serine/threonine-protein kinase CTR1 (821 aa).

2 disordered regions span residues 1–76 (MEMP…LNNQ) and 481–502 (NPGG…PSAN). Low complexity predominate over residues 14–25 (SQFSDDQVSVSV). Positions 35–49 (SLSSENRSNHNSGNT) are enriched in polar residues. Positions 551–809 (LNIKEKIGAG…TIMDLLRPLI (259 aa)) constitute a Protein kinase domain. Residues 557 to 565 (IGAGSFGTV) and K578 each bind ATP. D676 functions as the Proton acceptor in the catalytic mechanism.

This sequence belongs to the protein kinase superfamily. TKL Ser/Thr protein kinase family. RAF subfamily. As to quaternary structure, interacts with EIN2 (via C-terminus). Expressed in both seedlings and adult plants.

It catalyses the reaction L-seryl-[protein] + ATP = O-phospho-L-seryl-[protein] + ADP + H(+). The catalysed reaction is L-threonyl-[protein] + ATP = O-phospho-L-threonyl-[protein] + ADP + H(+). Its activity is regulated as follows. Kinase activity is inhibited by C24:1-ceramide during hypoxia (e.g. submergences). In terms of biological role, acts as a negative regulator in the ethylene response pathway. Phosphorylates the cytosolic C-terminal domain of EIN2, preventing the signaling in the absence of ethylene. Interacts with C24:1-ceramide upon hypoxic conditions (e.g. submergences) to in turn regulate EIN2 endoplasmic reticulum (ER)-to-nucleus translocation and EIN3 stabilization. The protein is Serine/threonine-protein kinase CTR1 of Arabidopsis thaliana (Mouse-ear cress).